The chain runs to 352 residues: Nicotinate-nucleotide--dimethylbenzimidazole phosphoribosyltransferase (352 aa).

E318 functions as the Proton acceptor in the catalytic mechanism.

It belongs to the CobT family.

The catalysed reaction is 5,6-dimethylbenzimidazole + nicotinate beta-D-ribonucleotide = alpha-ribazole 5'-phosphate + nicotinate + H(+). The protein operates within nucleoside biosynthesis; alpha-ribazole biosynthesis; alpha-ribazole from 5,6-dimethylbenzimidazole: step 1/2. In terms of biological role, catalyzes the synthesis of alpha-ribazole-5'-phosphate from nicotinate mononucleotide (NAMN) and 5,6-dimethylbenzimidazole (DMB). This chain is Nicotinate-nucleotide--dimethylbenzimidazole phosphoribosyltransferase, found in Geotalea uraniireducens (strain Rf4) (Geobacter uraniireducens).